Reading from the N-terminus, the 345-residue chain is N-acetyl-gamma-glutamyl-phosphate reductase (345 aa).

The active site involves Cys-151.

Belongs to the NAGSA dehydrogenase family. Type 1 subfamily.

It localises to the cytoplasm. The enzyme catalyses N-acetyl-L-glutamate 5-semialdehyde + phosphate + NADP(+) = N-acetyl-L-glutamyl 5-phosphate + NADPH + H(+). The protein operates within amino-acid biosynthesis; L-arginine biosynthesis; N(2)-acetyl-L-ornithine from L-glutamate: step 3/4. Catalyzes the NADPH-dependent reduction of N-acetyl-5-glutamyl phosphate to yield N-acetyl-L-glutamate 5-semialdehyde. The sequence is that of N-acetyl-gamma-glutamyl-phosphate reductase from Clostridium novyi (strain NT).